Consider the following 1390-residue polypeptide: DNA-directed RNA polymerase III subunit RPC1 (1390 aa).

Residues C69, C72, C79, H82, C109, and C112 each contribute to the Zn(2+) site. Residue K144 participates in DNA binding. Zn(2+) contacts are provided by C156 and C159. DNA is bound by residues K167, S326, K348, R353, R360, and R366. At K445 the chain carries N6-acetyllysine. An RNA-binding site is contributed by R464. Residues D499, D501, and D503 each coordinate Mg(2+). D503 provides a ligand contact to RNA. A bridging helix region spans residues 843–884 (TPTEFFFHTMAGREGLVDTAVKTAETGYMQRRLVKSLEDLCS). Positions 1029–1070 (PGSAVGALCAQSIGEPGTQMTLKTFHFAGVASMNITLGVPRI) are trigger loop. Positions 1159, 1305, and 1323 each coordinate DNA.

The protein belongs to the RNA polymerase beta' chain family. As to quaternary structure, component of the RNA polymerase III (Pol III) (Pol III) complex consisting of 17 subunits: a ten-subunit catalytic core composed of POLR3A/RPC1, POLR3B/RPC2, POLR1C/RPAC1, POLR1D/RPAC2, POLR3K/RPC10, POLR2E/RPABC1, POLR2F/RPABC2, POLR2H/RPABC3, POLR2K/RPABC4 and POLR2L/RPABC5; a mobile stalk composed of two subunits POLR3H/RPC8 and CRCP/RPC9, protruding from the core and functioning primarily in transcription initiation; and additional subunits homologous to general transcription factors of the RNA polymerase II machinery, POLR3C/RPC3-POLR3F/RPC6-POLR3G/RPC7 heterotrimer required for transcription initiation and POLR3D/RPC4-POLR3E/RPC5 heterodimer involved in both transcription initiation and termination. Pol III exists as two alternative complexes defined by the mutually exclusive incorporation of subunit POLR3G/RPC7alpha or POLR3GL/RPC7beta. The presence of POLR3G/RPC7alpha or POLR3GL/RPC7beta differentially modulates the transcription potential of Pol III, with POLR3G/RPC7alpha specifically associated with transcription of snaR-A non-coding RNAs. As part of the RNA polymerase III complex, interacts with PKP2. It depends on Mg(2+) as a cofactor. As to expression, expressed in the brain, in the cortex and the white matter (at protein level).

Its subcellular location is the nucleus. It is found in the cytoplasm. The protein resides in the cytosol. The enzyme catalyses RNA(n) + a ribonucleoside 5'-triphosphate = RNA(n+1) + diphosphate. Its function is as follows. Catalytic core component of RNA polymerase III (Pol III), a DNA-dependent RNA polymerase which synthesizes small non-coding RNAs using the four ribonucleoside triphosphates as substrates. Synthesizes 5S rRNA, snRNAs, tRNAs and miRNAs from at least 500 distinct genomic loci. Pol III-mediated transcription cycle proceeds through transcription initiation, transcription elongation and transcription termination stages. During transcription initiation, Pol III is recruited to DNA promoters type I, II or III with the help of general transcription factors and other specific initiation factors. Once the polymerase has escaped from the promoter it enters the elongation phase during which RNA is actively polymerized, based on complementarity with the template DNA strand. Transcription termination involves the release of the RNA transcript and polymerase from the DNA. Forms Pol III active center together with the second largest subunit POLR3B/RPC2. Appends one nucleotide at a time to the 3' end of the nascent RNA, with POLR3A/RPC1 contributing a Mg(2+)-coordinating DxDGD motif, and POLR3B/RPC2 participating in the coordination of a second Mg(2+) ion and providing lysine residues believed to facilitate Watson-Crick base pairing between the incoming nucleotide and template base. Typically, Mg(2+) ions direct a 5' nucleoside triphosphate to form a phosphodiester bond with the 3' hydroxyl of the preceding nucleotide of the nascent RNA, with the elimination of pyrophosphate. Pol III plays a key role in sensing and limiting infection by intracellular bacteria and DNA viruses. Acts as a nuclear and cytosolic DNA sensor involved in innate immune response. Can sense non-self dsDNA that serves as template for transcription into dsRNA. The non-self RNA polymerase III transcripts, such as Epstein-Barr virus-encoded RNAs (EBERs) induce type I interferon and NF-kappa-B through the RIG-I pathway. The sequence is that of DNA-directed RNA polymerase III subunit RPC1 from Homo sapiens (Human).